The primary structure comprises 329 residues: GTPase Obg (329 aa).

Residues 1-159 form the Obg domain; that stretch reads MQFIDEAKIF…MWVWLHLKLL (159 aa). The region spanning 160-327 is the OBG-type G domain; it reads SDVGLVGLPN…LLANILSELQ (168 aa). GTP contacts are provided by residues 166–173, 191–195, 212–215, 279–282, and 308–310; these read GLPNAGKS, FTTLT, DIPG, TKTD, and SSY. Mg(2+) is bound by residues S173 and T193.

The protein belongs to the TRAFAC class OBG-HflX-like GTPase superfamily. OBG GTPase family. In terms of assembly, monomer. The cofactor is Mg(2+).

Its subcellular location is the cytoplasm. Functionally, an essential GTPase which binds GTP, GDP and possibly (p)ppGpp with moderate affinity, with high nucleotide exchange rates and a fairly low GTP hydrolysis rate. Plays a role in control of the cell cycle, stress response, ribosome biogenesis and in those bacteria that undergo differentiation, in morphogenesis control. This Orientia tsutsugamushi (strain Boryong) (Rickettsia tsutsugamushi) protein is GTPase Obg.